The sequence spans 382 residues: Succinate--CoA ligase [ADP-forming] subunit beta (382 aa).

One can recognise an ATP-grasp domain in the interval Lys9–Lys237. Residues Lys45, Gly52–Gly54, Glu91, Val94, and Glu99 each bind ATP. Mg(2+)-binding residues include Asn191 and Asp205. Residues Asn257 and Gly314–Thr316 contribute to the substrate site.

This sequence belongs to the succinate/malate CoA ligase beta subunit family. In terms of assembly, heterotetramer of two alpha and two beta subunits. The cofactor is Mg(2+).

It catalyses the reaction succinate + ATP + CoA = succinyl-CoA + ADP + phosphate. It carries out the reaction GTP + succinate + CoA = succinyl-CoA + GDP + phosphate. It participates in carbohydrate metabolism; tricarboxylic acid cycle; succinate from succinyl-CoA (ligase route): step 1/1. Its function is as follows. Succinyl-CoA synthetase functions in the citric acid cycle (TCA), coupling the hydrolysis of succinyl-CoA to the synthesis of either ATP or GTP and thus represents the only step of substrate-level phosphorylation in the TCA. The beta subunit provides nucleotide specificity of the enzyme and binds the substrate succinate, while the binding sites for coenzyme A and phosphate are found in the alpha subunit. This chain is Succinate--CoA ligase [ADP-forming] subunit beta, found in Haloarcula marismortui (strain ATCC 43049 / DSM 3752 / JCM 8966 / VKM B-1809) (Halobacterium marismortui).